We begin with the raw amino-acid sequence, 65 residues long: Small ribosomal subunit protein eS27 (65 aa).

The Zn(2+) site is built by cysteine 20, cysteine 23, cysteine 39, and cysteine 42. A C4-type zinc finger spans residues 20-42 (CIDCGNEQIVFSHPATPVRCLVC).

This sequence belongs to the eukaryotic ribosomal protein eS27 family. Part of the 30S ribosomal subunit. It depends on Zn(2+) as a cofactor.

This Thermococcus kodakarensis (strain ATCC BAA-918 / JCM 12380 / KOD1) (Pyrococcus kodakaraensis (strain KOD1)) protein is Small ribosomal subunit protein eS27.